The chain runs to 1035 residues: DNA polymerase catalytic subunit (1035 aa).

Belongs to the DNA polymerase type-B family.

The protein resides in the host nucleus. It catalyses the reaction DNA(n) + a 2'-deoxyribonucleoside 5'-triphosphate = DNA(n+1) + diphosphate. The chain is DNA polymerase catalytic subunit (UL54) from Macaca mulatta (Rhesus macaque).